The chain runs to 94 residues: Co-chaperonin GroES (94 aa).

Belongs to the GroES chaperonin family. In terms of assembly, heptamer of 7 subunits arranged in a ring. Interacts with the chaperonin GroEL.

It is found in the cytoplasm. Together with the chaperonin GroEL, plays an essential role in assisting protein folding. The GroEL-GroES system forms a nano-cage that allows encapsulation of the non-native substrate proteins and provides a physical environment optimized to promote and accelerate protein folding. GroES binds to the apical surface of the GroEL ring, thereby capping the opening of the GroEL channel. The polypeptide is Co-chaperonin GroES (Streptococcus pneumoniae (strain 70585)).